Reading from the N-terminus, the 764-residue chain is Kinesin-like protein KIN-14N (764 aa).

The tract at residues 1–50 (MSTRATRPGMLHQKENAADAQAGKRQRTAAGSAARAPLSANAAPPAPDPA) is disordered. The span at 29-50 (AAGSAARAPLSANAAPPAPDPA) shows a compositional bias: low complexity. Residues 105-416 (AEIGKLNGLL…RLHNTILELK (312 aa)) adopt a coiled-coil conformation. Residues 418 to 747 (NIRVFCRVRP…LRFAARVNSC (330 aa)) enclose the Kinesin motor domain. Residue 498 to 505 (GQTGSGKT) participates in ATP binding.

The protein belongs to the TRAFAC class myosin-kinesin ATPase superfamily. Kinesin family. KIN-14 subfamily.

This Oryza sativa subsp. japonica (Rice) protein is Kinesin-like protein KIN-14N.